The chain runs to 292 residues: Protein LRATD1 (292 aa).

Serine 38 carries the phosphoserine modification. The LRAT domain occupies 133-228 (PAPEPPAPAP…CRFGKREFKA (96 aa)).

It belongs to the LRATD family. As to expression, only detected in testis. Highly expressed in colon cancer cells.

It localises to the cytoplasm. Functionally, may play a role in cell morphology and motility. In Homo sapiens (Human), this protein is Protein LRATD1.